The sequence spans 144 residues: 3-hydroxyacyl-[acyl-carrier-protein] dehydratase FabZ (144 aa).

His-48 is a catalytic residue.

The protein belongs to the thioester dehydratase family. FabZ subfamily.

It is found in the cytoplasm. It catalyses the reaction a (3R)-hydroxyacyl-[ACP] = a (2E)-enoyl-[ACP] + H2O. Its function is as follows. Involved in unsaturated fatty acids biosynthesis. Catalyzes the dehydration of short chain beta-hydroxyacyl-ACPs and long chain saturated and unsaturated beta-hydroxyacyl-ACPs. The sequence is that of 3-hydroxyacyl-[acyl-carrier-protein] dehydratase FabZ from Bacillus thuringiensis (strain Al Hakam).